A 45-amino-acid chain; its full sequence is Keratin-associated protein 22-2 (45 aa).

It belongs to the KRTAP type 20 family. In terms of assembly, interacts with hair keratins.

Functionally, in the hair cortex, hair keratin intermediate filaments are embedded in an interfilamentous matrix, consisting of hair keratin-associated proteins (KRTAP), which are essential for the formation of a rigid and resistant hair shaft through their extensive disulfide bond cross-linking with abundant cysteine residues of hair keratins. The matrix proteins include the high-sulfur and high-glycine-tyrosine keratins. This chain is Keratin-associated protein 22-2 (KRTAP22-2), found in Homo sapiens (Human).